Here is a 938-residue protein sequence, read N- to C-terminus: Catenin delta-1 (938 aa).

M1 carries the post-translational modification N-acetylmethionine. The interval 1-357 is necessary and sufficient for interaction with CCDC85B; it reads MDDSEVESTA…ASLDSLRKGM (357 aa). At S4 the chain carries Phosphoserine. A coiled-coil region spans residues 10–46; sequence ASILASVKEQEAQFEKLTRALEEERRHVSAQLERVRV. Phosphoserine is present on S47. The residue at position 59 (T59) is a Phosphothreonine. Y112 carries the phosphotyrosine; by FYN modification. S125 is modified (phosphoserine). Phosphotyrosine occurs at positions 217 and 221. Residue S225 is modified to Phosphoserine. Y228 carries the post-translational modification Phosphotyrosine. S230 and S252 each carry phosphoserine. Y257 is modified (phosphotyrosine). Residues S268 and S269 each carry the phosphoserine modification. At Y280 the chain carries Phosphotyrosine. S288 carries the phosphoserine modification. A Phosphotyrosine modification is found at Y291. S300 is modified (phosphoserine). T304 carries the post-translational modification Phosphothreonine. S320, S346, S349, and S352 each carry phosphoserine. ARM repeat units lie at residues 358 to 395, 398 to 437, 441 to 475, and 476 to 516; these read PPPSNWRQPELPEVIAMLGFRLDAVKSNAAAYLQHLCY, DKVKTDVRKLKGIPILVGLLDHPKKEVHLGACGALKNISF, QDNKIAIKNCDGVPALVRLLRKARDMDLTEVITGT, and LWNL…NEDC. K421 is covalently cross-linked (Glycyl lysine isopeptide (Lys-Gly) (interchain with G-Cter in SUMO2)). Residue K517 forms a Glycyl lysine isopeptide (Lys-Gly) (interchain with G-Cter in SUMO2) linkage. ARM repeat units follow at residues 534–573, 583–624, 653–693, 700–739, 740–780, and 781–826; these read LRNVSSERSEARRKLRECDGLVDALIFIVQAEIGQKDSDS, LRNL…AKKG, ARGY…NLCA, RYIRSALRQEKALSAIAELLTSEHERVVKAASGALRNLAV, DARN…SILN, and TINE…ALVL. S617 is subject to Phosphoserine. A Nuclear localization signal (NLS) motif is present at residues 622–629; that stretch reads KKGKDEWF. A Phosphoserine modification is found at S713. Residues S811, S847, S857, S859, S861, and S864 each carry the phosphoserine modification. Residues 855–938 form a disordered region; it reads NASRSQSSHS…LKGAPLMQKI (84 aa). Y865 bears the Phosphotyrosine mark. The residue at position 868 (S868) is a Phosphoserine. A Phosphothreonine modification is found at T869. Over residues 875 to 888 the composition is skewed to basic and acidic residues; that stretch reads RNQKSDKKPDREEI. At S879 the chain carries Phosphoserine. Residue K882 forms a Glycyl lysine isopeptide (Lys-Gly) (interchain with G-Cter in SUMO2) linkage. Residues 892–908 are compositionally biased toward polar residues; the sequence is NMGSNTKSLDNNYSTLN. A Phosphoserine modification is found at S899. Position 904 is a phosphotyrosine (Y904). T906 and T916 each carry phosphothreonine. Over residues 909-922 the composition is skewed to basic and acidic residues; the sequence is ERGDHNRTLDRSGD. Residue S920 is modified to Phosphoserine.

It belongs to the beta-catenin family. Belongs to a multiprotein cell-cell adhesion complex that also contains E-cadherin/CDH1, alpha-catenin/CTNNA1, beta-catenin/CTNNB1, and gamma-catenin/JUP. Binds to the C-terminal fragment of PSEN1 and mutually competes for CDH1. Interacts with ZBTB33. Interacts with GLIS2. Interacts with FER. Interacts with NANOS1 (via N-terminal region). Interacts (via N-terminus) with GNA12; the interaction regulates CDH1-mediated cell-cell adhesion. Interacts with GNA13. Component of a cadherin:catenin adhesion complex composed of at least of CDH26, beta-catenin/CTNNB1, alpha-catenin/CTNNA1 and p120 catenin/CTNND1. Interacts with CCDC85B. Interacts with PLPP3; negatively regulates the PLPP3-mediated stabilization of CTNNB1. Interacts with DSG3; the interaction facilitates DSG3 localization and retention at cell-cell junctions. Interacts with CTNND1/p120-catenin; the interaction controls CADH5 endocytosis. In terms of processing, phosphorylated by FER and other protein-tyrosine kinases. Phosphorylated at Ser-288 by PAK5. Dephosphorylated by PTPRJ. In terms of tissue distribution, expressed in basal keratinocytes (at protein level).

Its subcellular location is the cell junction. It localises to the adherens junction. The protein localises to the cytoplasm. The protein resides in the nucleus. It is found in the cell membrane. In terms of biological role, key regulator of cell-cell adhesion that associates with and regulates the cell adhesion properties of both C-, E- and N-cadherins, being critical for their surface stability. Promotes localization and retention of DSG3 at cell-cell junctions, via its interaction with DSG3. Beside cell-cell adhesion, regulates gene transcription through several transcription factors including ZBTB33/Kaiso2 and GLIS2, and the activity of Rho family GTPases and downstream cytoskeletal dynamics. Implicated both in cell transformation by SRC and in ligand-induced receptor signaling through the EGF, PDGF, CSF-1 and ERBB2 receptors. The sequence is that of Catenin delta-1 (Ctnnd1) from Mus musculus (Mouse).